Reading from the N-terminus, the 168-residue chain is MTNYACSITNNIPVKIYTDGACSHNPGPGGWGVYLSYKNHEKKVYGSNINTTNNRMELTATIEALRLLKHSYKVELYTDSQYVQMGITKWIKKWIKNNWETSNKQLVCNVDLWQLLYTLIQKHQVSWHWVRGHSGNIGNEIADKLATNGKIEAMKIAKNNENTKKFLD.

An RNase H type-1 domain is found at 10-151 (NNIPVKIYTD…ADKLATNGKI (142 aa)). The Mg(2+) site is built by aspartate 19, glutamate 57, aspartate 79, and aspartate 143.

The protein belongs to the RNase H family. In terms of assembly, monomer. Mg(2+) serves as cofactor.

Its subcellular location is the cytoplasm. It carries out the reaction Endonucleolytic cleavage to 5'-phosphomonoester.. In terms of biological role, endonuclease that specifically degrades the RNA of RNA-DNA hybrids. The polypeptide is Ribonuclease H (Orientia tsutsugamushi (strain Boryong) (Rickettsia tsutsugamushi)).